The primary structure comprises 228 residues: Auxin-responsive protein IAA16 (228 aa).

The EAR-like (transcriptional repression) motif lies at 19–23; sequence LSLAL. The segment covering 28 to 39 has biased composition (polar residues); sequence SSSGLQGNTSTA. 2 disordered regions span residues 28–57 and 70–90; these read SSSG…PAAP and NLAS…AAAA. The 118-residue stretch at 97-214 folds into the PB1 domain; the sequence is ARFVKVNMDG…RVLRSSDLNA (118 aa).

This sequence belongs to the Aux/IAA family. Homodimers and heterodimers. Expressed in roots, flowers and seedlings.

It localises to the nucleus. Aux/IAA proteins are short-lived transcriptional factors that function as repressors of early auxin response genes at low auxin concentrations. This is Auxin-responsive protein IAA16 (IAA16) from Oryza sativa subsp. japonica (Rice).